Reading from the N-terminus, the 291-residue chain is Pyridoxal 5'-phosphate synthase subunit PdxS (291 aa).

Residue Asp23 participates in D-ribose 5-phosphate binding. The Schiff-base intermediate with D-ribose 5-phosphate role is filled by Lys80. A D-ribose 5-phosphate-binding site is contributed by Gly152. Arg164 is a binding site for D-glyceraldehyde 3-phosphate. Residues Gly213 and 234–235 (GS) contribute to the D-ribose 5-phosphate site.

This sequence belongs to the PdxS/SNZ family. As to quaternary structure, in the presence of PdxT, forms a dodecamer of heterodimers.

The enzyme catalyses aldehydo-D-ribose 5-phosphate + D-glyceraldehyde 3-phosphate + L-glutamine = pyridoxal 5'-phosphate + L-glutamate + phosphate + 3 H2O + H(+). Its pathway is cofactor biosynthesis; pyridoxal 5'-phosphate biosynthesis. Catalyzes the formation of pyridoxal 5'-phosphate from ribose 5-phosphate (RBP), glyceraldehyde 3-phosphate (G3P) and ammonia. The ammonia is provided by the PdxT subunit. Can also use ribulose 5-phosphate and dihydroxyacetone phosphate as substrates, resulting from enzyme-catalyzed isomerization of RBP and G3P, respectively. The chain is Pyridoxal 5'-phosphate synthase subunit PdxS from Clostridium acetobutylicum (strain ATCC 824 / DSM 792 / JCM 1419 / IAM 19013 / LMG 5710 / NBRC 13948 / NRRL B-527 / VKM B-1787 / 2291 / W).